The primary structure comprises 735 residues: Protostadienol synthase helA (735 aa).

Residues 132-173 (KQEMCRYLLNVVNEDGGWGLFIQSPSTVFGTVMNYCMLRILG) form a PFTB 1 repeat. Asp-463 serves as the catalytic Proton donor. PFTB repeat units lie at residues 490–531 (LQQA…YENV), 567–607 (LSRS…ACMG), and 616–663 (CQRA…AVIG).

It belongs to the terpene cyclase/mutase family.

It catalyses the reaction (S)-2,3-epoxysqualene = (17Z)-protosta-17(20),24-dien-3beta-ol. Its pathway is mycotoxin biosynthesis. Functionally, protostadienol synthase; part of the gene cluster that mediates the biosynthesis of helvolic acid, an antibacterial nortriterpenoid. Protostadienol synthase helA cyclizes (3S)-oxidosqualene to (17Z)-protosta-17(20),24-dien-3-beta-ol (protostadienol). The synthesis of protostadienol is followed by several steps of monooxygenation, dehydrogenation, and acyl transfer to yield the final helvolic acid. Following the cyclization to the tetracyclic protostadienol by helA, cytochrome P450 monooxygenases helB1-mediated and helB2-mediated oxidation at C-4 and C-16, acyltransferase helD2-dependent acetylation of 16-OH, oxidation of C-21 by cytochrome P450 monooxygenase helB4, and short chain dehydrogenase helC-dependent oxidative decarboxylation yield the fusidane skeleton. This intermediate is further modified in three additional steps mediated by the cytochrome P450 monooxygenase helB3, the acyltransferase helD1, and the 3-ketosteroid 1-dehydrogenase helE to give helvolic acid. Compared with the late stages in the biosynthesis of helvolic acid, enzymes involved in the early stage modifications act in a relatively strict order. The hydroxylation of C-16 by helB1 and subsequent acetylation by helD2 should occur before the helB3-mediated oxidation of C-21. C-4 demethylation in fusidane-type antibiotics proceeds in an unusual manner though it is also achieved by oxidative decarboxylation. The methyl group at C-4 beta position is oxidized by helB1 and subsequently removed by the short chain dehydrogenase helC. The sequence is that of Protostadienol synthase helA from Aspergillus fumigatus (strain ATCC MYA-4609 / CBS 101355 / FGSC A1100 / Af293) (Neosartorya fumigata).